The chain runs to 2609 residues: Beige protein homolog 1 (2609 aa).

Disordered stretches follow at residues 1654–1679 (DSKL…APVS) and 1691–1729 (ILPS…KNRT). The span at 1711-1723 (MEDEEDDVDEEDK) shows a compositional bias: acidic residues. Positions 1735–1870 (ESGDSIQDVY…NRDSLYQKLV (136 aa)) constitute a BEACH-type PH domain. One can recognise a BEACH domain in the interval 1907–2202 (ANALSFSTTH…QVFKKPHPQR (296 aa)). WD repeat units follow at residues 2249–2290 (KDEV…QPVM), 2294–2332 (LHSE…PIKA), 2340–2379 (GHRY…FVSS), 2429–2475 (NSDE…NAKL), and 2507–2546 (ATRQ…SNVH). An FYVE-type zinc finger spans residues 2550 to 2604 (DNTSELCSLCDSRFSLMEWRSQCRACGNSNVCSDCVSMLKDTNIKTCYECYRQMP).

The protein localises to the cytoplasm. Its subcellular location is the membrane. In terms of biological role, may be involved in protein sorting and cell wall formation. This Schizosaccharomyces pombe (strain 972 / ATCC 24843) (Fission yeast) protein is Beige protein homolog 1 (lvs1).